The following is a 456-amino-acid chain: MQTVLKHVYIETYGCQMNEYDSSKMLAVLKNSHGITPVATPEEADVLLLNTCSVREKAQEKVFSQLGRWKSLKERKPHLIIGVGGCVASQEGEMIRRRAPEVDVVFGPQTLHRLPNLIEEAQRSRGGVVDVSFPEIEKFDHLPEPRAEGPTAYVSVMEGCSKYCTYCVVPYTRGAEISRPFDDVLAECATLAAQGVREINLLGQNVNAYRGAMHDGTIADLALLIEYVAAIPNIGRIRFTTSHPSEFSDALIETYRRVPKLVSHLHLPVQSGSNRILALMKRDYKVAEYQEKLAKIRAIRPDISFSSDFIVGFPGEEEEDFQATMDLIEAVFFDTSYSFIYSQRPGTPASTMPDRVPLTVKKERLARLQARILEMAASISEAMVGTEQWVLVDRLSRKSEREVSGRTENNRVVNFSAPASLIGRFAKVQITAAYKNSLRGRLIEAELLPDPVVYTR.

Residues 6 to 123 (KHVYIETYGC…LPNLIEEAQR (118 aa)) enclose the MTTase N-terminal domain. Residues C15, C52, C86, C160, C164, and C167 each contribute to the [4Fe-4S] cluster site. The 235-residue stretch at 146-380 (RAEGPTAYVS…RILEMAASIS (235 aa)) folds into the Radical SAM core domain. In terms of domain architecture, TRAM spans 381–444 (EAMVGTEQWV…KNSLRGRLIE (64 aa)).

This sequence belongs to the methylthiotransferase family. MiaB subfamily. In terms of assembly, monomer. [4Fe-4S] cluster serves as cofactor.

Its subcellular location is the cytoplasm. The catalysed reaction is N(6)-dimethylallyladenosine(37) in tRNA + (sulfur carrier)-SH + AH2 + 2 S-adenosyl-L-methionine = 2-methylsulfanyl-N(6)-dimethylallyladenosine(37) in tRNA + (sulfur carrier)-H + 5'-deoxyadenosine + L-methionine + A + S-adenosyl-L-homocysteine + 2 H(+). Functionally, catalyzes the methylthiolation of N6-(dimethylallyl)adenosine (i(6)A), leading to the formation of 2-methylthio-N6-(dimethylallyl)adenosine (ms(2)i(6)A) at position 37 in tRNAs that read codons beginning with uridine. In Dichelobacter nodosus (strain VCS1703A), this protein is tRNA-2-methylthio-N(6)-dimethylallyladenosine synthase.